Consider the following 224-residue polypeptide: DNA mismatch repair protein MutH (224 aa).

Belongs to the MutH family.

Its subcellular location is the cytoplasm. Its function is as follows. Sequence-specific endonuclease that cleaves unmethylated GATC sequences. It is involved in DNA mismatch repair. This is DNA mismatch repair protein MutH from Histophilus somni (strain 129Pt) (Haemophilus somnus).